The primary structure comprises 185 residues: Ribosome-recycling factor (185 aa).

The protein belongs to the RRF family.

It localises to the cytoplasm. Functionally, responsible for the release of ribosomes from messenger RNA at the termination of protein biosynthesis. May increase the efficiency of translation by recycling ribosomes from one round of translation to another. The polypeptide is Ribosome-recycling factor (Chloroflexus aggregans (strain MD-66 / DSM 9485)).